Here is a 127-residue protein sequence, read N- to C-terminus: Mating pheromone 4 (127 aa).

The signal sequence occupies residues 1–16 (MKAIFIILAILMVTQA). A propeptide spanning residues 17-42 (FKMTSKVKSMNMSRNMSKNTSTLGTK) is cleaved from the precursor.

The protein localises to the secreted. Mating ciliate pheromones (or gamones) are diffusible extracellular communication signals that distinguish different intraspecific classes of cells commonly referred to as 'mating types'. They prepare the latter for conjugation by changing their cell surface properties. In Euplotoides octocarinatus (Freshwater ciliate), this protein is Mating pheromone 4 (PHR4).